We begin with the raw amino-acid sequence, 119 residues long: Large ribosomal subunit protein uL14 (119 aa).

Belongs to the universal ribosomal protein uL14 family. Part of the 50S ribosomal subunit. Forms a cluster with proteins L3 and L19. In the 70S ribosome, L14 and L19 interact and together make contacts with the 16S rRNA in bridges B5 and B8.

Functionally, binds to 23S rRNA. Forms part of two intersubunit bridges in the 70S ribosome. The polypeptide is Large ribosomal subunit protein uL14 (Wolbachia sp. subsp. Brugia malayi (strain TRS)).